An 826-amino-acid polypeptide reads, in one-letter code: Ribosome-releasing factor 2, mitochondrial (826 aa).

Residues 1–44 constitute a mitochondrion transit peptide; it reads MIVRNLLGKNRLCCLQPKLLLSTLSQRPQLQLSLQLLCRATRLY. The 288-residue stretch at 53-340 folds into the tr-type G domain; sequence PKTRNIGIIA…GITNYLPSPL (288 aa). GTP is bound by residues 62–69, 126–130, and 180–183; these read AHIDAGKT, DTPGH, and NKMD.

The protein belongs to the TRAFAC class translation factor GTPase superfamily. Classic translation factor GTPase family. EF-G/EF-2 subfamily.

Its subcellular location is the mitochondrion. Mitochondrial GTPase that mediates the disassembly of ribosomes from messenger RNA at the termination of mitochondrial protein biosynthesis. Not involved in the GTP-dependent ribosomal translocation step during translation elongation. The chain is Ribosome-releasing factor 2, mitochondrial from Lodderomyces elongisporus (strain ATCC 11503 / CBS 2605 / JCM 1781 / NBRC 1676 / NRRL YB-4239) (Yeast).